Here is a 407-residue protein sequence, read N- to C-terminus: Magnesium-protoporphyrin IX monomethyl ester [oxidative] cyclase 1, chloroplastic (407 aa).

Residues 1-10 are compositionally biased toward polar residues; the sequence is MQTTLKQQRA. The disordered stretch occupies residues 1–28; the sequence is MQTTLKQQRASGRVSARQPFRSAAVARP.

This sequence belongs to the AcsF family. Fe cation is required as a cofactor.

The protein resides in the plastid. The protein localises to the chloroplast thylakoid membrane. It carries out the reaction Mg-protoporphyrin IX 13-monomethyl ester + 3 NADPH + 3 O2 + 2 H(+) = 3,8-divinyl protochlorophyllide a + 3 NADP(+) + 5 H2O. It functions in the pathway porphyrin-containing compound metabolism; chlorophyll biosynthesis. Its function is as follows. Catalyzes the formation of the isocyclic ring in chlorophyll biosynthesis under oxygen- and copper-deficient conditions. Mediates the cyclase reaction, which results in the formation of divinylprotochlorophyllide (Pchlide) characteristic of all chlorophylls from magnesium-protoporphyrin IX 13-monomethyl ester (MgPMME). This Chlamydomonas reinhardtii (Chlamydomonas smithii) protein is Magnesium-protoporphyrin IX monomethyl ester [oxidative] cyclase 1, chloroplastic (CRD1).